A 482-amino-acid chain; its full sequence is Alanine aminotransferase 2 (482 aa).

At K299 the chain carries N6-(pyridoxal phosphate)lysine.

This sequence belongs to the class-I pyridoxal-phosphate-dependent aminotransferase family. Alanine aminotransferase subfamily. As to quaternary structure, homodimer. Pyridoxal 5'-phosphate serves as cofactor. In terms of processing, the N-terminus is blocked. Mesophyll and bundle sheath cells.

The catalysed reaction is L-alanine + 2-oxoglutarate = pyruvate + L-glutamate. It functions in the pathway photosynthesis; C4 acid pathway. It participates in amino-acid degradation; L-alanine degradation via transaminase pathway; pyruvate from L-alanine: step 1/1. Its function is as follows. Transfer of C3 units between the cytosol of mesophyll and bundle sheath cells to maintain a nitrogen-carbon balance in the C4-dicarboxylic pathway. The polypeptide is Alanine aminotransferase 2 (Panicum miliaceum (Proso millet)).